The primary structure comprises 314 residues: Polyamine aminopropyltransferase (314 aa).

Residues 13–249 form the PABS domain; sequence WSWFLEWLTP…SMWGFVVASD (237 aa). S-methyl-5'-thioadenosine is bound at residue Gln42. Spermidine is bound by residues His73 and Glu97. S-methyl-5'-thioadenosine contacts are provided by residues Asp117 and 149–150; that span reads DA. The active-site Proton acceptor is the Asp168. An S-methyl-5'-thioadenosine-binding site is contributed by Pro177.

It belongs to the spermidine/spermine synthase family. As to quaternary structure, homodimer or homotetramer.

Its subcellular location is the cytoplasm. It catalyses the reaction S-adenosyl 3-(methylsulfanyl)propylamine + putrescine = S-methyl-5'-thioadenosine + spermidine + H(+). The protein operates within amine and polyamine biosynthesis; spermidine biosynthesis; spermidine from putrescine: step 1/1. In terms of biological role, catalyzes the irreversible transfer of a propylamine group from the amino donor S-adenosylmethioninamine (decarboxy-AdoMet) to putrescine (1,4-diaminobutane) to yield spermidine. The polypeptide is Polyamine aminopropyltransferase (Aeropyrum pernix (strain ATCC 700893 / DSM 11879 / JCM 9820 / NBRC 100138 / K1)).